A 546-amino-acid polypeptide reads, in one-letter code: Alpha-taxilin (546 aa).

Disordered regions lie at residues 1–170 (MKNQ…GLGK) and 482–546 (NKRV…SARA). A compositionally biased stretch (polar residues) spans 11 to 21 (AKQSNPKSSPG). Basic and acidic residues-rich tracts occupy residues 70–80 (DVSEELSRQLE) and 143–158 (EEIR…DHRR). Phosphoserine is present on Ser72. Positions 186–491 (EEKLAALCKK…NKRVQDLSAG (306 aa)) form a coiled coil. Residue Ser515 is modified to Phosphoserine. The segment covering 530 to 546 (TEASGQTGPQEPTSARA) has biased composition (polar residues).

Belongs to the taxilin family. In terms of assembly, binds to the C-terminal coiled coil region of syntaxin family members STX1A, STX3A and STX4A, but not when these proteins are complexed with SNAP25, VAMP2 or STXBP1, suggesting that it interacts with syntaxins that do not form the SNARE complex. In terms of tissue distribution, ubiquitous, with much higher expression in heart, kidney, liver and pancreas.

May be involved in intracellular vesicle traffic and potentially in calcium-dependent exocytosis in neuroendocrine cells. The polypeptide is Alpha-taxilin (TXLNA) (Homo sapiens (Human)).